A 324-amino-acid chain; its full sequence is MFCGEYVQGTIFPAPNFNPMMDAQMLGGALQGFDCNKDMLIDILTQRSNAQRQMIAGTYQSMYGRDLISVLKEQLSSHFKEVMVGLMYPPPSYDAHELWHAMKGPGTDENCLIEILASRTNGEIFQMREAYCLQYSNNLQEDIYSETSGHFRDTLMNLVQANREEGYSDPAMAAQDAMVLWEACQQKTGEHKTMMQMILCNKSYPQLWLVFQEFQNISGQDLVDAINDCYDGYFQELLVAIVRCIQDKPSYFAYKLYRAIHDFGFHNKTVIRILIARSEIDLMTIRKRYKERFGKSLFHDIKNFASGHYEKALLAICAGDVEDY.

4 Annexin repeats span residues 17–88 (FNPM…GLMY), 89–160 (PPPS…NLVQ), 171–243 (AMAA…AIVR), and 247–318 (DKPS…AICA).

It belongs to the annexin family.

This is Annexin A10 (Anxa10) from Mus musculus (Mouse).